Consider the following 221-residue polypeptide: Small ribosomal subunit protein uS2 (221 aa).

Residues 202 to 221 (KVKMPQQNQRGRPQRRFQRR) are disordered.

The protein belongs to the universal ribosomal protein uS2 family.

In Methanococcus vannielii (strain ATCC 35089 / DSM 1224 / JCM 13029 / OCM 148 / SB), this protein is Small ribosomal subunit protein uS2.